Here is a 255-residue protein sequence, read N- to C-terminus: Acetyl-coenzyme A carboxylase carboxyl transferase subunit alpha (255 aa).

The CoA carboxyltransferase C-terminal domain occupies 1-235; it reads MNIAKIVREA…KKELQTELAR (235 aa).

Belongs to the AccA family. In terms of assembly, acetyl-CoA carboxylase is a heterohexamer composed of biotin carboxyl carrier protein (AccB), biotin carboxylase (AccC) and two subunits each of ACCase subunit alpha (AccA) and ACCase subunit beta (AccD).

Its subcellular location is the cytoplasm. The catalysed reaction is N(6)-carboxybiotinyl-L-lysyl-[protein] + acetyl-CoA = N(6)-biotinyl-L-lysyl-[protein] + malonyl-CoA. The protein operates within lipid metabolism; malonyl-CoA biosynthesis; malonyl-CoA from acetyl-CoA: step 1/1. Component of the acetyl coenzyme A carboxylase (ACC) complex. First, biotin carboxylase catalyzes the carboxylation of biotin on its carrier protein (BCCP) and then the CO(2) group is transferred by the carboxyltransferase to acetyl-CoA to form malonyl-CoA. The sequence is that of Acetyl-coenzyme A carboxylase carboxyl transferase subunit alpha from Streptococcus pneumoniae serotype 19F (strain G54).